Consider the following 294-residue polypeptide: uncharacterized protein (294 aa).

The helical transmembrane segment at 5-25 (ILIILIIIIIVIISLIYLKNF) threads the bilayer. Residues Asn151, Asn170, Asn205, and Asn271 are each glycosylated (N-linked (GlcNAc...) asparagine; by host).

It localises to the membrane. This is an uncharacterized protein from Acanthamoeba polyphaga (Amoeba).